Here is a 39-residue protein sequence, read N- to C-terminus: Photosystem II reaction center protein L (39 aa).

A helical membrane pass occupies residues 18–38 (SLYLGLLFVFVTGVLMSSYFF).

This sequence belongs to the PsbL family. In terms of assembly, PSII is composed of 1 copy each of membrane proteins PsbA, PsbB, PsbC, PsbD, PsbE, PsbF, PsbH, PsbI, PsbJ, PsbK, PsbL, PsbM, PsbT, PsbX, PsbY, PsbZ, Psb30/Ycf12, peripheral proteins PsbO, CyanoQ (PsbQ), PsbU, PsbV and a large number of cofactors. It forms dimeric complexes.

The protein localises to the cellular thylakoid membrane. Functionally, one of the components of the core complex of photosystem II (PSII). PSII is a light-driven water:plastoquinone oxidoreductase that uses light energy to abstract electrons from H(2)O, generating O(2) and a proton gradient subsequently used for ATP formation. It consists of a core antenna complex that captures photons, and an electron transfer chain that converts photonic excitation into a charge separation. This subunit is found at the monomer-monomer interface and is required for correct PSII assembly and/or dimerization. The sequence is that of Photosystem II reaction center protein L from Parasynechococcus marenigrum (strain WH8102).